A 262-amino-acid polypeptide reads, in one-letter code: Electron transfer flavoprotein beta subunit lysine methyltransferase (262 aa).

Residues 1 to 38 (MALSLGWKAHRNHCGLLLQALRSSGLLLFPCGQCPWRG) constitute a mitochondrion transit peptide.

Belongs to the methyltransferase superfamily. ETFBKMT family. Interacts with HSPD1; this protein may possibly be a methylation substrate.

It is found in the cytoplasm. The protein resides in the mitochondrion matrix. The enzyme catalyses L-lysyl-[protein] + 3 S-adenosyl-L-methionine = N(6),N(6),N(6)-trimethyl-L-lysyl-[protein] + 3 S-adenosyl-L-homocysteine + 3 H(+). Functionally, protein-lysine methyltransferase that selectively trimethylates the flavoprotein ETFB in mitochondria. Thereby, may negatively regulate the function of ETFB in electron transfer from Acyl-CoA dehydrogenases to the main respiratory chain. The polypeptide is Electron transfer flavoprotein beta subunit lysine methyltransferase (Homo sapiens (Human)).